Consider the following 296-residue polypeptide: Galectin-3 (296 aa).

A compositionally biased stretch (polar residues) spans 1–11; that stretch reads MADSFSLNDAL. Residues 1–150 are disordered; the sequence is MADSFSLNDA…PSAPGAYPAA (150 aa). A2 carries the post-translational modification N-acetylalanine. S6 and S12 each carry phosphoserine; by CK1. 2 stretches are compositionally biased toward low complexity: residues 12-31 and 38-47; these read SGSG…NQPA and GASYPGAYPG. 8 consecutive repeat copies span residues 36 to 44, 45 to 53, 54 to 62, 63 to 71, 72 to 80, 81 to 89, 90 to 98, and 99 to 107. The tract at residues 36–143 is 12 X 9 AA tandem repeats of Y-P-G-X(3)-P-G-[GAT]; that stretch reads YPGASYPGAY…AYPPPGQPSA (108 aa). Pro residues predominate over residues 48–120; that stretch reads QAPPGGYPGQ…PTAPAYPGPT (73 aa). The 9; approximate repeat unit spans residues 108-115; that stretch reads YPGPTAPA. Repeat unit 10 spans residues 116 to 124; sequence YPGPTAPGT. Residues 121-133 are compositionally biased toward low complexity; the sequence is APGTQPGQPSGPG. Residues 125 to 134 form an 11; approximate repeat; sequence QPGQPSGPGA. Residues 135-143 form a 12; approximate repeat; the sequence is YPPPGQPSA. The region spanning 164–294 is the Galectin domain; the sequence is YDLPLPGGVK…DIDLTSASYA (131 aa). 227–233 contributes to the a beta-D-galactoside binding site; it reads WGKEERQ. The short motif at 272–287 is the Nuclear export signal element; the sequence is KNLPEISKLGISGDID.

As to quaternary structure, probably forms homo- or heterodimers. Interacts with DMBT1. Interacts with CD6 and ALCAM. Forms a complex with the ITGA3, ITGB1 and CSPG4. Interacts with LGALS3BP, LYPD3, ZFTRAF1 and UACA. Interacts with TRIM16; this interaction mediates autophagy of damage endomembranes. Interacts with cargo receptor TMED10; the interaction mediates the translocation from the cytoplasm into the ERGIC (endoplasmic reticulum-Golgi intermediate compartment) and thereby secretion. Interacts with and inhibits by binding NCR3/NKp30. In terms of processing, the degree of phosphorylation is higher in the cytoplasmic form than in the nuclear form. In protein isolated from a canine kidney cell line, 90% of the phosphate was on Ser-6 and 10% was on Ser-12.

It localises to the cytoplasm. Its subcellular location is the nucleus. The protein resides in the secreted. Functionally, galactose-specific lectin which binds IgE. May mediate with the alpha-3, beta-1 integrin the stimulation by CSPG4 of endothelial cells migration. Together with DMBT1, required for terminal differentiation of columnar epithelial cells during early embryogenesis. In the nucleus: acts as a pre-mRNA splicing factor. Involved in acute inflammatory responses including neutrophil activation and adhesion, chemoattraction of monocytes macrophages, opsonization of apoptotic neutrophils, and activation of mast cells. Together with TRIM16, coordinates the recognition of membrane damage with mobilization of the core autophagy regulators ATG16L1 and BECN1 in response to damaged endomembranes. When secreted, interacts with NK cell-activating receptor NCR3/NKp30 acting as an inhibitory ligand which antagonizes NK cell attack. This Canis lupus familiaris (Dog) protein is Galectin-3 (LGALS3).